The sequence spans 258 residues: Regulatory protein RecX (258 aa).

It belongs to the RecX family.

It localises to the cytoplasm. Modulates RecA activity. The protein is Regulatory protein RecX of Streptococcus thermophilus (strain CNRZ 1066).